The sequence spans 409 residues: Argininosuccinate synthase (409 aa).

ATP contacts are provided by residues 8 to 16 and A34; that span reads AYSGGLDTS. L-citrulline is bound at residue Y85. G115 lines the ATP pocket. L-aspartate-binding residues include T117, N121, and D122. N121 contributes to the L-citrulline binding site. R125, S178, S187, E268, and Y280 together coordinate L-citrulline.

Belongs to the argininosuccinate synthase family. Type 1 subfamily. As to quaternary structure, homotetramer.

The protein localises to the cytoplasm. It carries out the reaction L-citrulline + L-aspartate + ATP = 2-(N(omega)-L-arginino)succinate + AMP + diphosphate + H(+). It participates in amino-acid biosynthesis; L-arginine biosynthesis; L-arginine from L-ornithine and carbamoyl phosphate: step 2/3. This is Argininosuccinate synthase from Thermotoga maritima (strain ATCC 43589 / DSM 3109 / JCM 10099 / NBRC 100826 / MSB8).